The following is a 154-amino-acid chain: Pro-corazonin (154 aa).

The signal sequence occupies residues 1–19 (MLRLLLLPLFLFTLSMCMG). A Pyrrolidone carboxylic acid modification is found at Q20. Position 30 is an asparagine amide (N30). A propeptide spanning residues 70–154 (LERCLSQLQR…SAEPNVFGKH (85 aa)) is cleaved from the precursor.

This sequence belongs to the corazonin family. Expression is restricted to 24 neurons in the larval CNS (8 in the brain and 16 in the ventral nerve cord) and 12-16 neurons in the pars lateralis of the adult brain.

The protein localises to the secreted. In terms of biological role, cardioactive peptide. Corazonin is probably involved in the physiological regulation of the heart beat. Clock (Clk) and cycle (cyc) proteins negatively regulate Crz transcription in a cell-specific manner. In Drosophila simulans (Fruit fly), this protein is Pro-corazonin (Crz).